A 331-amino-acid polypeptide reads, in one-letter code: MRCWSPCSLLVVIVIYCLSSHTSEAFDLAQACVESQRLSLLPICDTIFAVQQEGAQQSADDGMRSKRFIRFGRALSGDAFLRFGKNVPDLPFEDKRFLRFGRAAPQLDDLLKQALQRVESLQKADETSVRRKRSTDAAPQNNAENPEQKNDSAKITKRYIDDVEDSDVKRFMRFGKRFMRFGRNPSDAGNKLTEKRFMRFGRDPEKRFMRFGKSDDKRFMRFGRNPSDVEDELEEDKRFMRFGRGGEDDEEEAEKRFMRFGRDPEKKFMRFGKSGEDKRFMRFGRNPDEQEADKRFMRFGRGGEDDEVSTEDKRFMRFGRSADKCKGCLEG.

The first 25 residues, 1–25 (MRCWSPCSLLVVIVIYCLSSHTSEA), serve as a signal peptide directing secretion. Residues 26–65 (FDLAQACVESQRLSLLPICDTIFAVQQEGAQQSADDGMRS) constitute a propeptide that is removed on maturation. Phenylalanine amide occurs at positions 71 and 83. A propeptide spanning residues 86 to 94 (NVPDLPFED) is cleaved from the precursor. A Phenylalanine amide modification is found at phenylalanine 100. Positions 103–168 (AAPQLDDLLK…YIDDVEDSDV (66 aa)) are excised as a propeptide. The segment at 122 to 158 (QKADETSVRRKRSTDAAPQNNAENPEQKNDSAKITKR) is disordered. Basic and acidic residues predominate over residues 146-158 (PEQKNDSAKITKR). Phenylalanine amide occurs at positions 174 and 181. A propeptide spanning residues 184 to 194 (NPSDAGNKLTE) is cleaved from the precursor. Residue phenylalanine 200 is modified to Phenylalanine amide. Positions 203 to 205 (DPE) are excised as a propeptide. Phenylalanine 211 carries the phenylalanine amide modification. Positions 214 to 216 (SDD) are excised as a propeptide. A Phenylalanine amide modification is found at phenylalanine 222. A propeptide spanning residues 225 to 236 (NPSDVEDELEED) is cleaved from the precursor. The residue at position 242 (phenylalanine 242) is a Phenylalanine amide. Residues 245–254 (GGEDDEEEAE) constitute a propeptide that is removed on maturation. Phenylalanine 260 bears the Phenylalanine amide mark. A propeptide spanning residues 263-265 (DPE) is cleaved from the precursor. Phenylalanine 271 is modified (phenylalanine amide). A propeptide spanning residues 274-277 (SGED) is cleaved from the precursor. A compositionally biased stretch (basic and acidic residues) spans 282 to 296 (RFGRNPDEQEADKRF). The disordered stretch occupies residues 282 to 310 (RFGRNPDEQEADKRFMRFGRGGEDDEVST). Position 283 is a phenylalanine amide (phenylalanine 283). Positions 286-293 (NPDEQEAD) are excised as a propeptide. Phenylalanine 299 is modified (phenylalanine amide). A propeptide spanning residues 302 to 312 (GGEDDEVSTED) is cleaved from the precursor. Residue phenylalanine 318 is modified to Phenylalanine amide. Residues 321–331 (SADKCKGCLEG) constitute a propeptide that is removed on maturation.

The protein belongs to the FARP (FMRFamide related peptide) family.

It localises to the secreted. In terms of biological role, excitatory neurotransmitters that directly modulate chromatophore function by activating chromatophore expansion at the chromatophore neuromuscular junction. This is FMRFamide-related neuropeptides from Doryteuthis pealeii (Longfin inshore squid).